The chain runs to 353 residues: Histidinol-phosphate aminotransferase (353 aa).

At Lys-211 the chain carries N6-(pyridoxal phosphate)lysine.

This sequence belongs to the class-II pyridoxal-phosphate-dependent aminotransferase family. Histidinol-phosphate aminotransferase subfamily. Homodimer. Pyridoxal 5'-phosphate is required as a cofactor.

It catalyses the reaction L-histidinol phosphate + 2-oxoglutarate = 3-(imidazol-4-yl)-2-oxopropyl phosphate + L-glutamate. It functions in the pathway amino-acid biosynthesis; L-histidine biosynthesis; L-histidine from 5-phospho-alpha-D-ribose 1-diphosphate: step 7/9. This Klebsiella pneumoniae (strain 342) protein is Histidinol-phosphate aminotransferase.